The sequence spans 153 residues: Agglutinin (153 aa).

Beta-D-galactosyl-(1-&gt;3)-N-acetyl-D-galactosamine contacts are provided by residues 22–25 (NAWE) and Asn46. The Ricin B-type lectin domain maps to 58–153 (GDSAEYLIIN…DNQKWYFDAK (96 aa)).

In terms of assembly, homodimer.

Lectin that primarily recognizes glycans with a non-reducing terminal N-acetylgalactosamine (GalNAc), with a preference for the alpha- over the beta-anomer. Can also bind non-reducing terminal galactose (Gal) residues but with a lower affinity. Strongly interacts with glycolipid type glycans with terminal non-reducing Gal or GalNAc but fails to bind sialylated or fucosylated forms of the same glycans. Strongly interacts with galactosylated N-glycans, displaying highest affinity for alpha-1-3 branched mono-antennary N-glycans but also binding to multi-antennary glycans. In Sclerotinia sclerotiorum (strain ATCC 18683 / 1980 / Ss-1) (White mold), this protein is Agglutinin.